Consider the following 258-residue polypeptide: Imidazole glycerol phosphate synthase subunit HisF (258 aa).

Residues D11 and D130 contribute to the active site.

It belongs to the HisA/HisF family. As to quaternary structure, heterodimer of HisH and HisF.

It localises to the cytoplasm. It catalyses the reaction 5-[(5-phospho-1-deoxy-D-ribulos-1-ylimino)methylamino]-1-(5-phospho-beta-D-ribosyl)imidazole-4-carboxamide + L-glutamine = D-erythro-1-(imidazol-4-yl)glycerol 3-phosphate + 5-amino-1-(5-phospho-beta-D-ribosyl)imidazole-4-carboxamide + L-glutamate + H(+). It participates in amino-acid biosynthesis; L-histidine biosynthesis; L-histidine from 5-phospho-alpha-D-ribose 1-diphosphate: step 5/9. Functionally, IGPS catalyzes the conversion of PRFAR and glutamine to IGP, AICAR and glutamate. The HisF subunit catalyzes the cyclization activity that produces IGP and AICAR from PRFAR using the ammonia provided by the HisH subunit. The chain is Imidazole glycerol phosphate synthase subunit HisF from Haemophilus influenzae (strain PittEE).